The following is a 216-amino-acid chain: Probable nicotinate-nucleotide adenylyltransferase (216 aa).

Belongs to the NadD family.

It catalyses the reaction nicotinate beta-D-ribonucleotide + ATP + H(+) = deamido-NAD(+) + diphosphate. The protein operates within cofactor biosynthesis; NAD(+) biosynthesis; deamido-NAD(+) from nicotinate D-ribonucleotide: step 1/1. Functionally, catalyzes the reversible adenylation of nicotinate mononucleotide (NaMN) to nicotinic acid adenine dinucleotide (NaAD). In Klebsiella pneumoniae (strain 342), this protein is Probable nicotinate-nucleotide adenylyltransferase.